We begin with the raw amino-acid sequence, 93 residues long: Small ribosomal subunit protein uS19c (93 aa).

The protein belongs to the universal ribosomal protein uS19 family.

The protein resides in the plastid. The protein localises to the chloroplast. Functionally, protein S19 forms a complex with S13 that binds strongly to the 16S ribosomal RNA. The sequence is that of Small ribosomal subunit protein uS19c from Ipomoea purpurea (Common morning glory).